The chain runs to 663 residues: DNA ligase (663 aa).

Residues aspartate 31–aspartate 35, serine 80–leucine 81, and glutamate 110 contribute to the NAD(+) site. The active-site N6-AMP-lysine intermediate is the lysine 112. 4 residues coordinate NAD(+): arginine 133, glutamate 170, lysine 285, and lysine 309. Positions 404, 407, 422, and 428 each coordinate Zn(2+). Residues phenylalanine 585 to glutamate 663 enclose the BRCT domain.

This sequence belongs to the NAD-dependent DNA ligase family. LigA subfamily. It depends on Mg(2+) as a cofactor. Mn(2+) is required as a cofactor.

It carries out the reaction NAD(+) + (deoxyribonucleotide)n-3'-hydroxyl + 5'-phospho-(deoxyribonucleotide)m = (deoxyribonucleotide)n+m + AMP + beta-nicotinamide D-nucleotide.. In terms of biological role, DNA ligase that catalyzes the formation of phosphodiester linkages between 5'-phosphoryl and 3'-hydroxyl groups in double-stranded DNA using NAD as a coenzyme and as the energy source for the reaction. It is essential for DNA replication and repair of damaged DNA. This Azobacteroides pseudotrichonymphae genomovar. CFP2 protein is DNA ligase.